The following is a 361-amino-acid chain: UDP-3-O-acylglucosamine N-acyltransferase (361 aa).

The active-site Proton acceptor is His-253.

This sequence belongs to the transferase hexapeptide repeat family. LpxD subfamily. As to quaternary structure, homotrimer.

The catalysed reaction is a UDP-3-O-[(3R)-3-hydroxyacyl]-alpha-D-glucosamine + a (3R)-hydroxyacyl-[ACP] = a UDP-2-N,3-O-bis[(3R)-3-hydroxyacyl]-alpha-D-glucosamine + holo-[ACP] + H(+). It functions in the pathway bacterial outer membrane biogenesis; LPS lipid A biosynthesis. In terms of biological role, catalyzes the N-acylation of UDP-3-O-acylglucosamine using 3-hydroxyacyl-ACP as the acyl donor. Is involved in the biosynthesis of lipid A, a phosphorylated glycolipid that anchors the lipopolysaccharide to the outer membrane of the cell. In Burkholderia thailandensis (strain ATCC 700388 / DSM 13276 / CCUG 48851 / CIP 106301 / E264), this protein is UDP-3-O-acylglucosamine N-acyltransferase.